A 645-amino-acid polypeptide reads, in one-letter code: 1,4-alpha-glucan branching enzyme GlgB (645 aa).

The active-site Nucleophile is the Asp-309. Glu-352 (proton donor) is an active-site residue. The disordered stretch occupies residues 619–645 (VKTRKGSKKQDGSKTKVRSNVTSRGKR). The segment covering 636 to 645 (RSNVTSRGKR) has biased composition (polar residues).

Belongs to the glycosyl hydrolase 13 family. GlgB subfamily. As to quaternary structure, monomer.

It carries out the reaction Transfers a segment of a (1-&gt;4)-alpha-D-glucan chain to a primary hydroxy group in a similar glucan chain.. It functions in the pathway glycan biosynthesis; glycogen biosynthesis. In terms of biological role, catalyzes the formation of the alpha-1,6-glucosidic linkages in glycogen by scission of a 1,4-alpha-linked oligosaccharide from growing alpha-1,4-glucan chains and the subsequent attachment of the oligosaccharide to the alpha-1,6 position. This is 1,4-alpha-glucan branching enzyme GlgB from Bacillus cereus (strain AH187).